The sequence spans 87 residues: DNA-directed RNA polymerase subunit omega (87 aa).

The protein belongs to the RNA polymerase subunit omega family. As to quaternary structure, the RNAP catalytic core consists of 2 alpha, 1 beta, 1 beta' and 1 omega subunit. When a sigma factor is associated with the core the holoenzyme is formed, which can initiate transcription.

It catalyses the reaction RNA(n) + a ribonucleoside 5'-triphosphate = RNA(n+1) + diphosphate. Its function is as follows. Promotes RNA polymerase assembly. Latches the N- and C-terminal regions of the beta' subunit thereby facilitating its interaction with the beta and alpha subunits. This Pseudomonas fluorescens (strain ATCC BAA-477 / NRRL B-23932 / Pf-5) protein is DNA-directed RNA polymerase subunit omega.